Here is a 2871-residue protein sequence, read N- to C-terminus: Fibrillin-1 (2871 aa).

The first 24 residues, 1 to 24 (MRRGRLLEIALGFTVLLASYTSHG), serve as a signal peptide directing secretion. Residues 25–44 (ADANLEAGNVKETRASRAKR) constitute a propeptide that is removed on maturation. A fibrillin unique N-terminal (FUN) domain region spans residues 45-81 (RGGGGHDALKGPNVCGSRYNAYCCPGWKTLPGGNQCI). The interval 45–450 (RGGGGHDALK…PPRVLPVNVT (406 aa)) is N-terminal domain. Disulfide bonds link Cys-59/Cys-68, Cys-67/Cys-80, Cys-85/Cys-94, Cys-89/Cys-100, Cys-102/Cys-111, Cys-119/Cys-129, Cys-123/Cys-134, Cys-136/Cys-145, Cys-150/Cys-160, Cys-154/Cys-166, and Cys-168/Cys-177. EGF-like domains lie at 81–112 (IVPI…PSCG), 115–146 (SIQH…THCG), and 147–178 (QPVC…PQCE). An interaction with MFAP4 region spans residues 119–329 (CNIRCMNGGS…YTSPDGTRCI (211 aa)). The TB 1 domain maps to 184–236 (GPCFTVISNQMCQGQLSGIVCTKTLCCATVGRAWGHPCEMCPAQPHPCRRGFI). The hybrid domain 1 stretch occupies residues 195–221 (CQGQLSGIVCTKTLCCATVGRAWGHPC). Residues 246 to 287 (DVDECQAIPGLCQGGNCINTVGSFECKCPAGHKLNEVSQKCE) form the EGF-like 4; calcium-binding domain. Disulfide bonds link Cys-250–Cys-262, Cys-257–Cys-271, Cys-273–Cys-286, Cys-292–Cys-304, Cys-299–Cys-313, and Cys-315–Cys-328. A glycan (O-linked (Glc) serine) is linked at Ser-268. The region spanning 288–329 (DIDECSTIPGICEGGECTNTVSSYFCKCPPGFYTSPDGTRCI) is the EGF-like 5; calcium-binding domain. One can recognise a TB 2 domain in the interval 334 to 389 (GYCYTALTNGRCSNQLPQSITKMQCCCDAGRCWSPGVTVAPEMCPIRATEDFNKLC). Asn-448 carries an N-linked (GlcNAc...) asparagine glycan. The EGF-like 6 domain occupies 449 to 489 (VTDYCQLVRYLCQNGRCIPTPGSYRCECNKGFQLDLRGECI). Cystine bridges form between Cys-453-Cys-465, Cys-460-Cys-474, Cys-476-Cys-488, Cys-494-Cys-504, Cys-499-Cys-513, Cys-515-Cys-528, Cys-534-Cys-546, Cys-541-Cys-555, Cys-557-Cys-570, Cys-576-Cys-587, Cys-582-Cys-596, Cys-598-Cys-611, Cys-617-Cys-628, Cys-623-Cys-637, and Cys-639-Cys-652. An O-linked (Glc) serine glycan is attached at Ser-471. An EGF-like 7; calcium-binding domain is found at 490-529 (DVDECEKNPCAGGECINNQGSYTCQCRAGYQSTLTRTECR). Ser-510 carries O-linked (Glc) serine glycosylation. An EGF-like 8; calcium-binding domain is found at 530–571 (DIDECLQNGRICNNGRCINTDGSFHCVCNAGFHVTRDGKNCE). O-linked (Glc) serine glycosylation occurs at Ser-552. Positions 572 to 612 (DMDECSIRNMCLNGMCINEDGSFKCICKPGFQLASDGRYCK) constitute an EGF-like 9; calcium-binding domain. A glycan (O-linked (Glc) serine) is linked at Ser-593. One can recognise an EGF-like 10; calcium-binding domain in the interval 613 to 653 (DINECETPGICMNGRCVNTDGSYRCECFPGLAVGLDGRVCV). Ser-634 carries O-linked (Glc) serine glycosylation. Residues 659-711 (STCYGGYKRGQCIKPLFGAVTKSECCCASTEYAFGEPCQPCPAQNSAEYQALC) form the TB 3 domain. The EGF-like 11; calcium-binding domain maps to 723 to 764 (DINECALDPDICPNGICENLRGTYKCICNSGYEVDSTGKNCV). 16 cysteine pairs are disulfide-bonded: Cys-727/Cys-739, Cys-734/Cys-748, Cys-750/Cys-763, Cys-769/Cys-781, Cys-776/Cys-790, Cys-792/Cys-805, Cys-811/Cys-821, Cys-816/Cys-830, Cys-832/Cys-845, Cys-853/Cys-875, Cys-862/Cys-887, Cys-876/Cys-890, Cys-896/Cys-908, Cys-914/Cys-926, Cys-921/Cys-935, and Cys-937/Cys-950. Residues 765–806 (DINECVLNSLLCDNGQCRNTPGSFVCTCPKGFIYKPDLKTCE) enclose the EGF-like 12; calcium-binding domain. A glycan (O-linked (Glc) serine) is linked at Ser-787. The EGF-like 13; calcium-binding domain occupies 807–846 (DIDECESSPCINGVCKNSPGSFICECSSESTLDPTKTICI). Ser-827 is a glycosylation site (O-linked (Glc) serine). The TB 4 domain maps to 851–902 (GTCWQTVIDGRCEININGATLKSQCCSSLGAAWGSPCTLCQVDPICGKGYSR). A hybrid domain 2 region spans residues 862 to 887 (CEININGATLKSQCCSSLGAAWGSPC). An EGF-like 14; calcium-binding domain is found at 910 to 951 (DIDECEVFPGVCKNGLCVNTRGSFKCQCPSGMTLDATGRICL). The 53-residue stretch at 956-1008 (ETCFLRYEDEECTLPIAGRHRMDACCCSVGAAWGTEECEECPMRNTPEYEELC) folds into the TB 5 domain. The 42-residue stretch at 1028–1069 (DINECKMIPSLCTHGKCRNTIGSFKCRCDSGFALDSEERNCT) folds into the EGF-like 15; calcium-binding domain. Disulfide bonds link Cys-1032–Cys-1044, Cys-1039–Cys-1053, Cys-1055–Cys-1068, Cys-1074–Cys-1086, Cys-1081–Cys-1095, Cys-1097–Cys-1111, Cys-1117–Cys-1129, Cys-1124–Cys-1138, Cys-1140–Cys-1153, Cys-1159–Cys-1171, Cys-1166–Cys-1180, Cys-1182–Cys-1195, Cys-1201–Cys-1212, Cys-1208–Cys-1221, Cys-1223–Cys-1236, Cys-1242–Cys-1254, Cys-1249–Cys-1263, Cys-1265–Cys-1278, Cys-1284–Cys-1296, Cys-1291–Cys-1305, Cys-1307–Cys-1320, Cys-1326–Cys-1339, Cys-1333–Cys-1348, Cys-1350–Cys-1361, Cys-1367–Cys-1380, Cys-1374–Cys-1389, Cys-1391–Cys-1402, Cys-1408–Cys-1420, Cys-1415–Cys-1429, Cys-1431–Cys-1444, Cys-1450–Cys-1461, Cys-1456–Cys-1470, Cys-1472–Cys-1485, Cys-1491–Cys-1502, Cys-1497–Cys-1511, Cys-1513–Cys-1526, Cys-1534–Cys-1562, Cys-1549–Cys-1574, Cys-1563–Cys-1577, Cys-1564–Cys-1589, Cys-1610–Cys-1622, Cys-1617–Cys-1631, Cys-1633–Cys-1646, Cys-1652–Cys-1663, Cys-1658–Cys-1672, and Cys-1674–Cys-1687. O-linked (Glc) serine glycosylation occurs at Ser-1050. N-linked (GlcNAc...) asparagine glycosylation is present at Asn-1067. The region spanning 1070-1112 (DIDECRISPDLCGRGQCVNTPGDFECKCDEGYESGFMMMKNCM) is the EGF-like 16; calcium-binding domain. Positions 1113–1154 (DIDECQRDPLLCRGGVCHNTEGSYRCECPPGHQLSPNISACI) constitute an EGF-like 17; calcium-binding domain. Residue Ser-1135 is glycosylated (O-linked (Glc) serine). Asn-1149 carries N-linked (GlcNAc...) asparagine glycosylation. Residues 1155 to 1196 (DINECELSAHLCPNGRCVNLIGKYQCACNPGYHSTPDRLFCV) form the EGF-like 18; calcium-binding domain. The EGF-like 19; calcium-binding domain occupies 1197 to 1237 (DIDECSIMNGGCETFCTNSEGSYECSCQPGFALMPDQRSCT). O-linked (Glc) serine glycosylation occurs at Ser-1218. The region spanning 1238-1279 (DIDECEDNPNICDGGQCTNIPGEYRCLCYDGFMASEDMKTCV) is the EGF-like 20; calcium-binding domain. In terms of domain architecture, EGF-like 21; calcium-binding spans 1280 to 1321 (DVNECDLNPNICLSGTCENTKGSFICHCDMGYSGKKGKTGCT). A glycan (O-linked (Glc) serine) is linked at Ser-1302. One can recognise an EGF-like 22; calcium-binding domain in the interval 1322–1362 (DINECEIGAHNCGKHAVCTNTAGSFKCSCSPGWIGDGIKCT). Ser-1345 carries an O-linked (Glc) serine glycan. In terms of domain architecture, EGF-like 23; calcium-binding spans 1363 to 1403 (DLDECSNGTHMCSQHADCKNTMGSYRCLCKEGYTGDGFTCT). N-linked (GlcNAc...) asparagine glycosylation is present at Asn-1369. O-linked (Glc) serine glycosylation is present at Ser-1386. Positions 1404–1445 (DLDECSENLNLCGNGQCLNAPGGYRCECDMGFVPSADGKACE) constitute an EGF-like 24; calcium-binding domain. The region spanning 1446–1486 (DIDECSLPNICVFGTCHNLPGLFRCECEIGYELDRSGGNCT) is the EGF-like 25; calcium-binding domain. Asn-1484 is a glycosylation site (N-linked (GlcNAc...) asparagine). In terms of domain architecture, EGF-like 26; calcium-binding spans 1487–1527 (DVNECLDPTTCISGNCVNTPGSYICDCPPDFELNPTRVGCV). Ser-1508 carries O-linked (Glc) serine glycosylation. Residues 1528–2731 (DTRSGNCYLD…GYPKRGRKRR (1204 aa)) are C-terminal domain. The TB 6 domain occupies 1532–1589 (GNCYLDIRPRGDNGDTACSNEIGVGVSKASCCCSLGKAWGTPCEMCPAVNTSEYKILC). A Cell attachment site motif is present at residues 1541–1543 (RGD). Asn-1581 carries N-linked (GlcNAc...) asparagine glycosylation. Residues 1606-1647 (DIDECQELPGLCQGGKCINTFGSFQCRCPTGYYLNEDTRVCD) form the EGF-like 27; calcium-binding domain. An O-linked (Glc) serine glycan is attached at Ser-1628. The EGF-like 28; calcium-binding domain occupies 1648–1688 (DVNECETPGICGPGTCYNTVGNYTCICPPDYMQVNGGNNCM). Asn-1669 carries an N-linked (GlcNAc...) asparagine glycan. One can recognise a TB 7 domain in the interval 1693 to 1748 (SLCYRNYYADNQTCDGELLFNMTKKMCCCSYNIGRAWNKPCEQCPIPSTDEFATLC). N-linked (GlcNAc...) asparagine glycosylation is found at Asn-1703 and Asn-1713. Positions 1766–1807 (DIDECREIPGVCENGVCINMVGSFRCECPVGFFYNDKLLVCE) constitute an EGF-like 29; calcium-binding domain. 40 disulfide bridges follow: Cys-1770–Cys-1782, Cys-1777–Cys-1791, Cys-1793–Cys-1806, Cys-1812–Cys-1824, Cys-1818–Cys-1833, Cys-1835–Cys-1847, Cys-1853–Cys-1865, Cys-1860–Cys-1874, Cys-1876–Cys-1889, Cys-1895–Cys-1905, Cys-1900–Cys-1914, Cys-1916–Cys-1928, Cys-1934–Cys-1947, Cys-1942–Cys-1956, Cys-1958–Cys-1971, Cys-1977–Cys-1989, Cys-1984–Cys-1998, Cys-2000–Cys-2011, Cys-2017–Cys-2029, Cys-2024–Cys-2038, Cys-2040–Cys-2053, Cys-2061–Cys-2083, Cys-2070–Cys-2096, Cys-2084–Cys-2099, Cys-2085–Cys-2111, Cys-2131–Cys-2142, Cys-2137–Cys-2151, Cys-2153–Cys-2164, Cys-2170–Cys-2181, Cys-2176–Cys-2190, Cys-2192–Cys-2204, Cys-2210–Cys-2221, Cys-2217–Cys-2230, Cys-2232–Cys-2245, Cys-2251–Cys-2265, Cys-2258–Cys-2274, Cys-2276–Cys-2289, Cys-2295–Cys-2307, Cys-2302–Cys-2316, and Cys-2318–Cys-2331. The region spanning 1808-1848 (DIDECQNGPVCQRNAECINTAGSYRCDCKPGYRFTSTGQCN) is the EGF-like 30; calcium-binding domain. Residue Ser-1830 is glycosylated (O-linked (Glc) serine). The EGF-like 31; calcium-binding domain occupies 1849 to 1890 (DRNECQEIPNICSHGQCIDTVGSFYCLCHTGFKTNDDQTMCL). O-linked (Glc) serine glycosylation is present at Ser-1871. The EGF-like 32; calcium-binding domain occupies 1891 to 1929 (DINECERDACGNGTCRNTIGSFNCRCNHGFILSHNNDCI). N-linked (GlcNAc...) asparagine glycosylation is present at Asn-1902. O-linked (Glc) serine glycosylation is present at Ser-1911. In terms of domain architecture, EGF-like 33; calcium-binding spans 1930 to 1972 (DVDECASGNGNLCRNGQCINTVGSFQCQCNEGYEVAPDGRTCV). O-linked (Glc) serine glycosylation is present at Ser-1953. Residues 1973-2012 (DINECLLEPRKCAPGTCQNLDGSYRCICPPGYSLQNEKCE) form the EGF-like 34; calcium-binding domain. An EGF-like 35; calcium-binding domain is found at 2013-2054 (DIDECVEEPEICALGTCSNTEGSFKCLCPEGFSLSSSGRRCQ). An O-linked (Glc) serine glycan is attached at Ser-2035. A TB 8 domain is found at 2059–2111 (SYCYAKFEGGKCSSPKSRNHSKQECCCALKGEGWGDPCELCPTEPDEAFRQIC). A glycan (N-linked (GlcNAc...) asparagine) is linked at Asn-2077. One can recognise an EGF-like 36; calcium-binding domain in the interval 2127 to 2165 (DMDECKEPDVCKHGQCINTDGSYRCECPFGYILAGNECV). Residue Ser-2148 is glycosylated (O-linked (Glc) serine). The EGF-like 37; calcium-binding domain occupies 2166-2205 (DTDECSVGNPCGNGTCKNVIGGFECTCEEGFEPGPMMTCE). Asn-2178 carries N-linked (GlcNAc...) asparagine glycosylation. Residues 2206–2246 (DINECAQNPLLCAFRCVNTYGSYECKCPVGYVLREDRRMCK) enclose the EGF-like 38; calcium-binding domain. The O-linked (Glc) serine glycan is linked to Ser-2227. Positions 2247 to 2290 (DEDECEEGKHDCTEKQMECKNLIGTYMCICGPGYQRRPDGEGCV) constitute an EGF-like 39; calcium-binding domain. Residues 2291–2332 (DENECQTKPGICENGRCLNTRGSYTCECNDGFTASPNQDECL) form the EGF-like 40; calcium-binding domain. Residue Ser-2313 is glycosylated (O-linked (Glc) serine). Positions 2337-2390 (GYCFTEVLQNMCQIGSSNRNPVTKSECCCDGGRGWGPHCEICPFQGTVAFKKLC) constitute a TB 9 domain. The 42-residue stretch at 2402–2443 (DIDECKVIHDVCRNGECVNDRGSYHCICKTGYTPDITGTSCV) folds into the EGF-like 41; calcium-binding domain. 21 disulfides stabilise this stretch: Cys-2406–Cys-2418, Cys-2413–Cys-2427, Cys-2429–Cys-2442, Cys-2448–Cys-2459, Cys-2455–Cys-2468, Cys-2470–Cys-2483, Cys-2489–Cys-2500, Cys-2496–Cys-2509, Cys-2511–Cys-2522, Cys-2528–Cys-2541, Cys-2535–Cys-2550, Cys-2552–Cys-2565, Cys-2571–Cys-2581, Cys-2577–Cys-2590, Cys-2592–Cys-2605, Cys-2611–Cys-2622, Cys-2617–Cys-2631, Cys-2633–Cys-2646, Cys-2652–Cys-2663, Cys-2659–Cys-2672, and Cys-2674–Cys-2686. Positions 2444–2484 (DLNECNQAPKPCNFICKNTEGSYQCSCPKGYILQEDGRSCK) constitute an EGF-like 42; calcium-binding domain. Ser-2465 carries O-linked (Glc) serine glycosylation. Residues 2485–2523 (DLDECATKQHNCQFLCVNTIGGFTCKCPPGFTQHHTSCI) form the EGF-like 43; calcium-binding domain. Positions 2524-2566 (DNNECTSDINLCGSKGICQNTPGSFTCECQRGFSLDQTGSSCE) constitute an EGF-like 44; calcium-binding domain. An O-linked (Glc) serine glycan is attached at Ser-2547. In terms of domain architecture, EGF-like 45; calcium-binding spans 2567 to 2606 (DVDECEGNHRCQHGCQNIIGGYRCSCPQGYLQHYQWNQCV). Positions 2607–2647 (DENECLSAHICGGASCHNTLGSYKCMCPAGFQYEQFSGGCQ) constitute an EGF-like 46; calcium-binding domain. An O-linked (Glc) serine glycan is attached at Ser-2628. Residues 2648–2687 (DINECGSAQAPCSYGCSNTEGGYLCGCPPGYFRIGQGHCV) form the EGF-like 47; calcium-binding domain. At Ser-2702 the chain carries Phosphoserine; by FAM20C. A Phosphoserine modification is found at Ser-2709. Residues 2726–2746 (RGRKRRSTNETDASNIEDQSE) are disordered. Residue Asn-2734 is glycosylated (N-linked (GlcNAc...) asparagine). The span at 2735 to 2746 (ETDASNIEDQSE) shows a compositional bias: polar residues. Residues Asn-2750 and Asn-2767 are each glycosylated (N-linked (GlcNAc...) asparagine).

It belongs to the fibrillin family. Interacts with COL16A1. Interacts with integrin alpha-V/beta-3. Interacts with ADAMTS10; this interaction promotes microfibril assembly. Interacts with THSD4; this interaction promotes fibril formation. Interacts (via N-terminal domain) with FBLN2 and FBLN5. Interacts with ELN. Forms a ternary complex with ELN and FBLN2 or FBLN5 and a significant interaction with ELN seen only in the presence of FBLN2 or FBLN5. Interacts (via N-terminal domain) with LTBP2 (via C-terminal domain) in a Ca(+2)-dependent manner. Interacts (via N-terminal domain) with LTBP1 (via C-terminal domain). Interacts with integrins ITGA5:ITGB1, ITGAV:ITGB3 and ITGAV:ITGB6. Interacts (via N-terminal domain) with BMP2, BMP4, BMP7, BMP10 and GDF5. Interacts (via N-terminal domain) with MFAP2 and MFAP5. Interacts with ADAMTSL5. Interacts with MFAP4. Interacts (via N-terminal domain) with TNFSF11 in a Ca(+2)-dependent manner. Interacts (via N-terminal domain) with EFEMP2; this interaction inhibits EFEMP2 binding to LOX and ELN. Post-translationally, cleavage of N- and C-terminus by furin is required for incorporation into the extracellular matrix and assembly into microfibrils. The C-terminus, which corresponds to the Asprosin chain, was initially thought to constitute a propeptide. Fibrillin-1 and Asprosin chains are still linked together during the secretion from cells, but are subsequently separated by furin, an essential step for incorporation of Fibrillin-1 into the nascent microfibrils. In terms of processing, forms intermolecular disulfide bonds either with other fibrillin-1 molecules or with other components of the microfibrils. O-glycosylated on serine residues by POGLUT2 and POGLUT3 which is necessary for efficient protein secretion.

The protein localises to the secreted. It localises to the extracellular space. The protein resides in the extracellular matrix. Structural component of the 10-12 nm diameter microfibrils of the extracellular matrix, which conveys both structural and regulatory properties to load-bearing connective tissues. Fibrillin-1-containing microfibrils provide long-term force bearing structural support. In tissues such as the lung, blood vessels and skin, microfibrils form the periphery of the elastic fiber, acting as a scaffold for the deposition of elastin. In addition, microfibrils can occur as elastin-independent networks in tissues such as the ciliary zonule, tendon, cornea and glomerulus where they provide tensile strength and have anchoring roles. Fibrillin-1 also plays a key role in tissue homeostasis through specific interactions with growth factors, such as the bone morphogenetic proteins (BMPs), growth and differentiation factors (GDFs) and latent transforming growth factor-beta-binding proteins (LTBPs), cell-surface integrins and other extracellular matrix protein and proteoglycan components. Regulates osteoblast maturation by controlling TGF-beta bioavailability and calibrating TGF-beta and BMP levels, respectively. Negatively regulates osteoclastogenesis by binding and sequestering an osteoclast differentiation and activation factor TNFSF11. This leads to disruption of TNFSF11-induced Ca(2+) signaling and impairment of TNFSF11-mediated nuclear translocation and activation of transcription factor NFATC1 which regulates genes important for osteoclast differentiation and function. Mediates cell adhesion via its binding to cell surface receptors integrins ITGAV:ITGB3 and ITGA5:ITGB1. Binds heparin and this interaction has an important role in the assembly of microfibrils. In terms of biological role, adipokine secreted by white adipose tissue that plays an important regulatory role in the glucose metabolism of liver, muscle and pancreas. Hormone that targets the liver in response to fasting to increase plasma glucose levels. Binds the olfactory receptor OR4M1 at the surface of hepatocytes and promotes hepatocyte glucose release by activating the protein kinase A activity in the liver, resulting in rapid glucose release into the circulation. May act as a regulator of adaptive thermogenesis by inhibiting browning and energy consumption, while increasing lipid deposition in white adipose tissue. Also acts as an orexigenic hormone that increases appetite: crosses the blood brain barrier and exerts effects on the hypothalamus. In the arcuate nucleus of the hypothalamus, asprosin directly activates orexigenic AgRP neurons and indirectly inhibits anorexigenic POMC neurons, resulting in appetite stimulation. Activates orexigenic AgRP neurons via binding to the olfactory receptor OR4M1. May also play a role in sperm motility in testis via interaction with OR4M1 receptor. The polypeptide is Fibrillin-1 (Homo sapiens (Human)).